Reading from the N-terminus, the 149-residue chain is Calmodulin (149 aa).

At Ala-2 the chain carries N-acetylalanine. EF-hand domains lie at 8–43 (EQVS…LGQN), 44–79 (PSES…KMKD), 81–116 (DSEE…IGEK), and 117–149 (LTDD…MMQK). 19 residues coordinate Ca(2+): Asp-21, Asp-23, Asp-25, Gln-27, Glu-32, Asp-57, Asp-59, Asn-61, Thr-63, Glu-68, Asp-94, Asp-96, Asn-98, Glu-105, Asp-130, Asp-132, Asp-134, Arg-136, and Glu-141.

This sequence belongs to the calmodulin family.

Calmodulin mediates the control of a large number of enzymes, ion channels and other proteins by Ca(2+). Among the enzymes to be stimulated by the calmodulin-Ca(2+) complex are a number of protein kinases and phosphatases. This chain is Calmodulin, found in Colletotrichum gloeosporioides (Anthracnose fungus).